A 134-amino-acid polypeptide reads, in one-letter code: NADH-quinone oxidoreductase subunit A 1 (134 aa).

3 helical membrane passes run 10 to 30 (LIPL…LLLA), 65 to 85 (FYLI…ILAW), and 94 to 114 (IPGL…LVWL).

This sequence belongs to the complex I subunit 3 family. NDH-1 is composed of 14 different subunits. Subunits NuoA, H, J, K, L, M, N constitute the membrane sector of the complex.

Its subcellular location is the cell inner membrane. The catalysed reaction is a quinone + NADH + 5 H(+)(in) = a quinol + NAD(+) + 4 H(+)(out). NDH-1 shuttles electrons from NADH, via FMN and iron-sulfur (Fe-S) centers, to quinones in the respiratory chain. The immediate electron acceptor for the enzyme in this species is believed to be ubiquinone. Couples the redox reaction to proton translocation (for every two electrons transferred, four hydrogen ions are translocated across the cytoplasmic membrane), and thus conserves the redox energy in a proton gradient. The protein is NADH-quinone oxidoreductase subunit A 1 of Citrifermentans bemidjiense (strain ATCC BAA-1014 / DSM 16622 / JCM 12645 / Bem) (Geobacter bemidjiensis).